Consider the following 67-residue polypeptide: Beta-defensin 9 (67 aa).

Residues 1-24 form the signal peptide; that stretch reads MRTLCSLLLICCLLFSYTTPAANS. Intrachain disulfides connect Cys34–Cys62, Cys41–Cys55, and Cys45–Cys63.

This sequence belongs to the beta-defensin family. Weakly expressed in adult and neonatal brain.

The protein resides in the secreted. Its function is as follows. Has antibacterial activity. This is Beta-defensin 9 (Defb9) from Mus musculus (Mouse).